Here is a 103-residue protein sequence, read N- to C-terminus: Pyrimidine/purine nucleoside phosphorylase (103 aa).

The protein belongs to the nucleoside phosphorylase PpnP family.

The catalysed reaction is a purine D-ribonucleoside + phosphate = a purine nucleobase + alpha-D-ribose 1-phosphate. It carries out the reaction adenosine + phosphate = alpha-D-ribose 1-phosphate + adenine. The enzyme catalyses cytidine + phosphate = cytosine + alpha-D-ribose 1-phosphate. It catalyses the reaction guanosine + phosphate = alpha-D-ribose 1-phosphate + guanine. The catalysed reaction is inosine + phosphate = alpha-D-ribose 1-phosphate + hypoxanthine. It carries out the reaction thymidine + phosphate = 2-deoxy-alpha-D-ribose 1-phosphate + thymine. The enzyme catalyses uridine + phosphate = alpha-D-ribose 1-phosphate + uracil. It catalyses the reaction xanthosine + phosphate = alpha-D-ribose 1-phosphate + xanthine. In terms of biological role, catalyzes the phosphorolysis of diverse nucleosides, yielding D-ribose 1-phosphate and the respective free bases. Can use uridine, adenosine, guanosine, cytidine, thymidine, inosine and xanthosine as substrates. Also catalyzes the reverse reactions. This Methylococcus capsulatus (strain ATCC 33009 / NCIMB 11132 / Bath) protein is Pyrimidine/purine nucleoside phosphorylase.